The primary structure comprises 446 residues: Phosphoglucosamine mutase (446 aa).

Ser100 acts as the Phosphoserine intermediate in catalysis. 4 residues coordinate Mg(2+): Ser100, Asp241, Asp243, and Asp245. Residue Ser100 is modified to Phosphoserine.

The protein belongs to the phosphohexose mutase family. Mg(2+) serves as cofactor. Post-translationally, activated by phosphorylation.

It carries out the reaction alpha-D-glucosamine 1-phosphate = D-glucosamine 6-phosphate. Its function is as follows. Catalyzes the conversion of glucosamine-6-phosphate to glucosamine-1-phosphate. This Methylorubrum populi (strain ATCC BAA-705 / NCIMB 13946 / BJ001) (Methylobacterium populi) protein is Phosphoglucosamine mutase.